The primary structure comprises 201 residues: LexA repressor 1 (201 aa).

Positions 27 to 47 form a DNA-binding region, H-T-H motif; it reads LAEIAQAFGFASRNAAQKHVQ. Active-site for autocatalytic cleavage activity residues include Ser-122 and Lys-159.

This sequence belongs to the peptidase S24 family. Homodimer.

It catalyses the reaction Hydrolysis of Ala-|-Gly bond in repressor LexA.. Its function is as follows. Represses a number of genes involved in the response to DNA damage (SOS response), including recA and lexA. In the presence of single-stranded DNA, RecA interacts with LexA causing an autocatalytic cleavage which disrupts the DNA-binding part of LexA, leading to derepression of the SOS regulon and eventually DNA repair. In Xanthomonas campestris pv. campestris (strain ATCC 33913 / DSM 3586 / NCPPB 528 / LMG 568 / P 25), this protein is LexA repressor 1.